A 273-amino-acid polypeptide reads, in one-letter code: Dermonecrotic toxin LruSicTox-alphaIC1a (273 aa).

Histidine 5 is a catalytic residue. Mg(2+) contacts are provided by glutamate 25 and aspartate 27. The active-site Nucleophile is histidine 41. Cystine bridges form between cysteine 45/cysteine 51 and cysteine 47/cysteine 190. Residue aspartate 85 participates in Mg(2+) binding.

This sequence belongs to the arthropod phospholipase D family. Class II subfamily. Requires Mg(2+) as cofactor. As to expression, expressed by the venom gland.

The protein localises to the secreted. The enzyme catalyses an N-(acyl)-sphingosylphosphocholine = an N-(acyl)-sphingosyl-1,3-cyclic phosphate + choline. The catalysed reaction is an N-(acyl)-sphingosylphosphoethanolamine = an N-(acyl)-sphingosyl-1,3-cyclic phosphate + ethanolamine. It carries out the reaction a 1-acyl-sn-glycero-3-phosphocholine = a 1-acyl-sn-glycero-2,3-cyclic phosphate + choline. It catalyses the reaction a 1-acyl-sn-glycero-3-phosphoethanolamine = a 1-acyl-sn-glycero-2,3-cyclic phosphate + ethanolamine. In terms of biological role, dermonecrotic toxins cleave the phosphodiester linkage between the phosphate and headgroup of certain phospholipids (sphingolipid and lysolipid substrates), forming an alcohol (often choline) and a cyclic phosphate. This toxin acts on sphingomyelin (SM). It may also act on ceramide phosphoethanolamine (CPE), lysophosphatidylcholine (LPC) and lysophosphatidylethanolamine (LPE), but not on lysophosphatidylserine (LPS), and lysophosphatidylglycerol (LPG). It acts by transphosphatidylation, releasing exclusively cyclic phosphate products as second products. Induces dermonecrosis, hemolysis, increased vascular permeability, edema, inflammatory response, and platelet aggregation. This is Dermonecrotic toxin LruSicTox-alphaIC1a from Loxosceles rufescens (Mediterranean recluse spider).